The primary structure comprises 1749 residues: E3 ubiquitin-protein ligase UBR1 (1749 aa).

N-acetylalanine is present on alanine 2. At threonine 21 the chain carries Phosphothreonine. The segment at 97–168 (QLCGRVFKSG…TGPFCVNHEP (72 aa)) adopts a UBR-type zinc-finger fold. Residues cysteine 99, cysteine 112, cysteine 115, cysteine 124, cysteine 127, histidine 133, and histidine 136 each coordinate Zn(2+). Residue phenylalanine 148 coordinates a peptide. Zn(2+) is bound at residue cysteine 149. Position 150 (aspartate 150) interacts with a peptide. Cysteine 151 serves as a coordination point for Zn(2+). Aspartate 153 contacts a peptide. Zn(2+) contacts are provided by cysteine 163 and histidine 166. Positions 842–868 (QHSKAEHMQKKRRKQENKDEALPPPPP) are disordered. The tract at residues 1019–1054 (RKRKAEAARLHRQKIMAQMSALQKNFIETHKLMYDN) is UBC2-binding region (U2BR). The Zn(2+) site is built by cysteine 1098, cysteine 1101, cysteine 1159, histidine 1161, histidine 1164, and cysteine 1167. An RING-type; atypical zinc finger spans residues 1098 to 1201 (CILCQEEQEV…SGEYLCPLCK (104 aa)). Serine 1179 is subject to Phosphoserine. Zn(2+) contacts are provided by cysteine 1197, cysteine 1200, cysteine 1627, cysteine 1630, and cysteine 1653.

The protein belongs to the E3 ubiquitin-protein ligase UBR1-like family. In terms of assembly, interacts with RECQL4. As to expression, broadly expressed, with highest levels in skeletal muscle, kidney and pancreas. Present in acinar cells of the pancreas (at protein level).

Its subcellular location is the cytoplasm. It is found in the cytosol. The catalysed reaction is S-ubiquitinyl-[E2 ubiquitin-conjugating enzyme]-L-cysteine + [acceptor protein]-L-lysine = [E2 ubiquitin-conjugating enzyme]-L-cysteine + N(6)-ubiquitinyl-[acceptor protein]-L-lysine.. Its pathway is protein modification; protein ubiquitination. With respect to regulation, inhibited by the small-molecule compound RF-C11, which bears two heterovalent ligands: RF-C11 inhibits activity toward both type-1 and type-2 N-degrons. Functionally, E3 ubiquitin-protein ligase which is a component of the N-end rule pathway. Recognizes and binds proteins bearing specific N-terminal residues that are destabilizing according to the N-end rule, leading to their ubiquitination and subsequent degradation. Recognizes both type-1 and type-2 N-degrons, containing positively charged amino acids (Arg, Lys and His) and bulky and hydrophobic amino acids, respectively. Does not ubiquitinate proteins that are acetylated at the N-terminus. In contrast, it strongly binds methylated N-degrons. Binds leucine and is a negative regulator of the leucine-mTOR signaling pathway, thereby controlling cell growth. This is E3 ubiquitin-protein ligase UBR1 from Homo sapiens (Human).